The following is an 889-amino-acid chain: MKGSELRQRFLDYFARQGHAVVPSSSLIPADNPTLLFTVAGMVQFNDVFLGRESRPYSRAVSSQKCLRISGKQNDLENVGPSPRHHTFFEMLGNFSFGDYFKKDAIRFAWEFLTQEIGLDPKRMWVSIYEGDEQIPADEEAHDLWLAYMPAERILRFDAKDNLWSAGDVGPRGPCSEIHYYIGDDPDNQVPEGVNSEDDTYMEIWNLVFMQYNRDENGVLTLLPKPSIDTGMSLERLAIVKQGVFRSYETDLFTPIIHTVMELLGTGSDHYQANSSAYHVVADHSRSIAFMIADGLRPGNEGRSYVLRRLVRRAAYFGQTIGFKAPFLAETIATVIDMMGAAYPELRSKQAYIAEVVTGEEERFNKTLAGGLRQLEAMLPNQADKAVFSGADAFKLYDTYGFPLDLTERIVAERGLTVDLAGYEAELEAQRARGRGAAQFKKGAVTERWAERNLAPTSFTGYNELESWGHVLALEFDGEELGTVQRGQEVAFVLDRTPCYAESGGQMGDSGVLVGPHGTIVIDDVQKPVPGVFVHRGKVSKGSVSLGEQVTVTVDAARRRDIVRNHTATHLLHRALRDTLGDHAEQKGSLVAPERLRFDFNNQKGLSSEQLQQIEDQVNAWIRADSKVEAAEMALPQARELGAMALFGEKYGDVVRVVTVGCGNASDHIHTNSEAPVCSRELCGGVHVARTGEIGFFKIVSEGSVASGVRRIEAVTGRAAAEWVSQQAQLIRTLGDKLGAQPGKVEEKLDALLLDQKARRDEIERLRGEIAAGQVDSLLAQKIEQAGTPLVVARVEASDADSFRRLGEQLRDKIGSGVVILGTVIDGKPLLLAAATADQVKAGRHAGNLVKALAAKVGGGGGGRADFAQAGGRDAAALDQALAEANGLL.

The Zn(2+) site is built by His-566, His-570, Cys-683, and His-687.

This sequence belongs to the class-II aminoacyl-tRNA synthetase family. Zn(2+) serves as cofactor.

Its subcellular location is the cytoplasm. It carries out the reaction tRNA(Ala) + L-alanine + ATP = L-alanyl-tRNA(Ala) + AMP + diphosphate. Catalyzes the attachment of alanine to tRNA(Ala) in a two-step reaction: alanine is first activated by ATP to form Ala-AMP and then transferred to the acceptor end of tRNA(Ala). Also edits incorrectly charged Ser-tRNA(Ala) and Gly-tRNA(Ala) via its editing domain. This chain is Alanine--tRNA ligase, found in Herpetosiphon aurantiacus (strain ATCC 23779 / DSM 785 / 114-95).